A 2564-amino-acid chain; its full sequence is Spectrin beta chain, non-erythrocytic 4 (2564 aa).

The interval 1-37 is disordered; it reads MAQVPGEVDNMEGLPAPNNNPAARWESPDRGWEREQP. The segment at 1 to 282 is actin-binding; it reads MAQVPGEVDN…IITYVVSFYH (282 aa). The segment covering 26 to 36 has biased composition (basic and acidic residues); it reads ESPDRGWEREQ. Calponin-homology (CH) domains follow at residues 61–165 and 180–285; these read AVQK…LRFQ and RSAK…HYFS. 14 Spectrin repeats span residues 311 to 418, 430 to 533, 536 to 641, 774 to 879, 884 to 982, 1089 to 1196, 1306 to 1407, 1412 to 1512, 1515 to 1617, 1623 to 1725, 1728 to 1830, 1835 to 1935, 1944 to 2046, and 2049 to 2123; these read IERY…AALR, LAQR…RLEQ, ALQK…AELE, ALHQ…WLRD, YRMF…RKEE, RLQR…EALV, ELQH…RQLF, ADQL…RLLL, KELH…QQVL, VEQY…ALEQ, WLYQ…AQLL, ELHK…EDAR, ALRF…WLQQ, and EVHQ…QSKQ. The segment at 1853-1872 is disordered; that stretch reads KRRRLPRLTTPPEPRPSASS. Positions 2208–2225 are enriched in low complexity; that stretch reads PAAPEDAAETPATPAAAE. Disordered stretches follow at residues 2208–2439 and 2533–2564; these read PAAP…KSSN and ARWGQTLPTTSSTDEGNPKREGGDRRASGRRK. Composition is skewed to basic and acidic residues over residues 2227–2254, 2268–2278, and 2287–2318; these read VRPRPERQESADRAEELPRRRRPERQES, ERQESAEHEAA, and EQMERRRERRERRLERQESSEQEMPIRGDLVK. A compositionally biased stretch (pro residues) spans 2343-2355; the sequence is PSLPQPRELPPGR. Basic and acidic residues-rich tracts occupy residues 2362-2377 and 2424-2435; these read LPERTPRPDRPRARDR and FLLRKRELDANR. The 110-residue stretch at 2418–2527 folds into the PH domain; sequence TVQHEGFLLR…WLEAVASSVA (110 aa). Over residues 2538–2547 the composition is skewed to polar residues; the sequence is TLPTTSSTDE. Over residues 2548 to 2564 the composition is skewed to basic and acidic residues; the sequence is GNPKREGGDRRASGRRK.

Belongs to the spectrin family. In terms of tissue distribution, expressed in skeletal muscle at the sarcolemma and in the muscle capillaries (at protein level). Abundantly expressed in brain and pancreatic islets.

Its subcellular location is the cytoplasm. The protein localises to the cytoskeleton. It is found in the cell cortex. The sequence is that of Spectrin beta chain, non-erythrocytic 4 (SPTBN4) from Homo sapiens (Human).